Reading from the N-terminus, the 327-residue chain is UPF0665 family protein C23C4.06c (327 aa).

This sequence belongs to the UPF0665 family.

Its subcellular location is the cytoplasm. The protein resides in the nucleus. This Schizosaccharomyces pombe (strain 972 / ATCC 24843) (Fission yeast) protein is UPF0665 family protein C23C4.06c.